A 128-amino-acid chain; its full sequence is Cytochrome c-type biogenesis protein CcmE (128 aa).

The Cytoplasmic portion of the chain corresponds to Met-1 to Arg-8. Residues Leu-9–Asn-29 traverse the membrane as a helical; Signal-anchor for type II membrane protein segment. Residues Leu-30–Ser-128 are Periplasmic-facing. Heme contacts are provided by His-120 and Tyr-124.

Belongs to the CcmE/CycJ family.

It localises to the cell inner membrane. Functionally, heme chaperone required for the biogenesis of c-type cytochromes. Transiently binds heme delivered by CcmC and transfers the heme to apo-cytochromes in a process facilitated by CcmF and CcmH. This chain is Cytochrome c-type biogenesis protein CcmE, found in Rickettsia prowazekii (strain Madrid E).